Consider the following 99-residue polypeptide: Plastocyanin (99 aa).

A Plastocyanin-like domain is found at 1–99; the sequence is LDVLLGGDDG…AGMVGKVTVN (99 aa). Residues His37, Cys84, His87, and Met92 each contribute to the Cu cation site.

The protein belongs to the plastocyanin family. It depends on Cu(2+) as a cofactor.

The protein localises to the plastid. It localises to the chloroplast thylakoid membrane. Its function is as follows. Participates in electron transfer between P700 and the cytochrome b6-f complex in photosystem I. In Solanum tuberosum (Potato), this protein is Plastocyanin (PETE).